The chain runs to 1736 residues: Collagen alpha-2(XI) chain (1736 aa).

The N-terminal stretch at 1-27 (MERCSRCHRLLLFLPLVLGLSAAPGWA) is a signal peptide. The Laminin G-like domain maps to 57–228 (DVAYRVARPA…QSCGQKDLEC (172 aa)). Positions 215-486 (QAAYQSCGQK…ILQQARLALR (272 aa)) are nonhelical region. Disordered regions lie at residues 228–270 (CERE…PTES), 364–465 (LSAE…DKGP), and 485–1538 (LRGP…GSPA). Polar residues predominate over residues 258 to 269 (PQSQEPQKQPTE). Collagen-like domains lie at 399-447 (GPPG…GPPG), 487-545 (GPPG…ADGA), and 546-583 (RGMP…GLPG). Positions 487-1500 (GPPGPMGYTG…PGHPGPPGEV (1014 aa)) are triple-helical region. Low complexity predominate over residues 497–533 (RPGPLGQPGSPGLKGESGDLGPQGPRGPQGLTGPPGK). Over residues 615-624 (KGPPGIPGPP) the composition is skewed to pro residues. Over residues 650-668 (QQGTPGAQGLPGPQGAIGP) the composition is skewed to low complexity. In terms of domain architecture, Collagen-like 4 spans 682 to 737 (GMPGSDGLPGHPGKEGPPGTKGNQGPSGPQGPLGYPGPRGVKGVDGIRGLKGHKGE). Over residues 765-774 (RGEDGPEGPK) the composition is skewed to basic and acidic residues. Composition is skewed to low complexity over residues 776 to 789 (RTGP…TGLM) and 842 to 861 (PTGP…SGAK). Collagen-like domains lie at 868–924 (GPHG…PGPP), 967–1025 (GDPG…AAGS), 1026–1055 (GGPI…EKGP), 1056–1086 (IGPT…DGDK), and 1114–1172 (GPVG…ETGD). Over residues 994-1003 (GTAGGPGLKG) the composition is skewed to gly residues. Over residues 1029 to 1040 (IGPPGRPGPQGP) the composition is skewed to pro residues. Composition is skewed to low complexity over residues 1115–1133 (PVGQ…ARGP) and 1155–1164 (IGLQGLPGPS). Pro residues predominate over residues 1176–1187 (MGPPGPPGPRGP). A compositionally biased stretch (low complexity) spans 1188–1197 (AGPNGADGPQ). The span at 1198-1207 (GSPGGVGNLG) shows a compositional bias: gly residues. Residues 1217-1230 (ESGSPGVQGEPGVK) show a composition bias toward low complexity. The span at 1232 to 1241 (PRGERGEKGE) shows a compositional bias: basic and acidic residues. The segment covering 1256 to 1272 (PTGDNGPKGNPGPVGFP) has biased composition (low complexity). The span at 1287 to 1296 (DGAKGDRGED) shows a compositional bias: basic and acidic residues. Low complexity predominate over residues 1376–1386 (QQGRPGATGQA). Pro residues-rich tracts occupy residues 1388-1397 (PPGPVGPPGL) and 1457-1467 (PGGPPGLPGPS). Collagen-like domains follow at residues 1393–1447 (GPPG…GETG) and 1448–1499 (IPGA…PPGE). Residues 1469 to 1481 (PKGAKGATGPAGP) show a composition bias toward low complexity. Positions 1501–1736 (IQPLPIQMPK…VLLGPVCFMG (236 aa)) are cleaved as a propeptide — C-terminal propeptide. The Fibrillar collagen NC1 domain maps to 1541–1735 (EEIFGSLDSL…GVLLGPVCFM (195 aa)). Cys-1571 and Cys-1603 are joined by a disulfide. Ca(2+) contacts are provided by Asp-1589, Asn-1591, Gln-1592, Cys-1594, and Asp-1597. N-linked (GlcNAc...) asparagine glycosylation is present at Asn-1604. 2 cysteine pairs are disulfide-bonded: Cys-1612/Cys-1733 and Cys-1655/Cys-1689.

It belongs to the fibrillar collagen family. In terms of assembly, trimers composed of three different chains: alpha 1(XI), alpha 2(XI), and alpha 3(XI). Alpha 3(XI) is a post-translational modification of alpha 1(II). Alpha 1(V) can also be found instead of alpha 3(XI)=1(II). Post-translationally, prolines at the third position of the tripeptide repeating unit (G-X-Y) are hydroxylated in some or all of the chains.

It is found in the secreted. It localises to the extracellular space. Its subcellular location is the extracellular matrix. Functionally, may play an important role in fibrillogenesis by controlling lateral growth of collagen II fibrils. The sequence is that of Collagen alpha-2(XI) chain (Col11a2) from Mus musculus (Mouse).